The sequence spans 647 residues: Threonine--tRNA ligase (647 aa).

The TGS domain maps to 1–61; sequence MIKITFPDGA…EEDGSIEIVT (61 aa). Residues 240-538 form a catalytic region; it reads DHRKLGKELD…LIETYKGAFP (299 aa). Cys-334, His-385, and His-515 together coordinate Zn(2+).

Belongs to the class-II aminoacyl-tRNA synthetase family. Homodimer. Requires Zn(2+) as cofactor.

It localises to the cytoplasm. The catalysed reaction is tRNA(Thr) + L-threonine + ATP = L-threonyl-tRNA(Thr) + AMP + diphosphate + H(+). In terms of biological role, catalyzes the attachment of threonine to tRNA(Thr) in a two-step reaction: L-threonine is first activated by ATP to form Thr-AMP and then transferred to the acceptor end of tRNA(Thr). Also edits incorrectly charged L-seryl-tRNA(Thr). The protein is Threonine--tRNA ligase of Streptococcus pyogenes serotype M2 (strain MGAS10270).